We begin with the raw amino-acid sequence, 141 residues long: MAKKVAQVIKLQIPAGKATPAPPVGPALGQHGVNIMSFCKEFNEQTANQEGMLIPVEITVYEDRSFTFITKTPPAAVLLKKAAGIDKASGEPNKNKVATVGKDKVKEIAELKMQDMNASDLDAAMKMVEGTARSMGIIVEG.

The protein belongs to the universal ribosomal protein uL11 family. In terms of assembly, part of the ribosomal stalk of the 50S ribosomal subunit. Interacts with L10 and the large rRNA to form the base of the stalk. L10 forms an elongated spine to which L12 dimers bind in a sequential fashion forming a multimeric L10(L12)X complex. In terms of processing, one or more lysine residues are methylated.

Its function is as follows. Forms part of the ribosomal stalk which helps the ribosome interact with GTP-bound translation factors. The sequence is that of Large ribosomal subunit protein uL11 from Natranaerobius thermophilus (strain ATCC BAA-1301 / DSM 18059 / JW/NM-WN-LF).